A 261-amino-acid chain; its full sequence is Intermembrane phospholipid transport system permease protein MlaE (261 aa).

Over 1 to 12 (MIVNFISALGKQ) the chain is Cytoplasmic. A helical membrane pass occupies residues 13 to 33 (VIDFFRALGRAGFMLFGALIG). Over 34 to 49 (KPQIRKHFPLLVKQMH) the chain is Periplasmic. Residues 50-70 (VLGVQSLLIILLSGLFIGMVL) traverse the membrane as a helical segment. The Cytoplasmic segment spans residues 71-147 (GLQGYVVLID…DPLRRVIAPR (77 aa)). The helical transmembrane segment at 148-168 (FWAGVISMPVLSILFIAIGIW) threads the bilayer. Over 169 to 198 (GGSLVGVDWKGVDSGSFWSVMQNSVSWSYD) the chain is Periplasmic. Residues 199–219 (ILNGFIKAVFFAVAVTWIALF) traverse the membrane as a helical segment. At 220–238 (NGYDCMPTSEGISQATTRT) the chain is on the cytoplasmic side. Residues 239 to 259 (VVHASLVVLGLDFILTAIMFG) form a helical membrane-spanning segment. Residues 260 to 261 (AG) lie on the Periplasmic side of the membrane.

This sequence belongs to the MlaE permease family. In terms of assembly, the complex is composed of two ATP-binding proteins (MlaF), two transmembrane proteins (MlaE), two cytoplasmic solute-binding proteins (MlaB) and six periplasmic solute-binding proteins (MlaD).

The protein resides in the cell inner membrane. Functionally, part of the ABC transporter complex MlaFEDB, which is involved in a phospholipid transport pathway that maintains lipid asymmetry in the outer membrane by retrograde trafficking of phospholipids from the outer membrane to the inner membrane. Probably responsible for the translocation of the substrate across the membrane. The sequence is that of Intermembrane phospholipid transport system permease protein MlaE from Haemophilus influenzae (strain ATCC 51907 / DSM 11121 / KW20 / Rd).